We begin with the raw amino-acid sequence, 383 residues long: Cytochrome b (383 aa).

4 helical membrane passes run 31 to 51 (FGSL…FLAM), 75 to 97 (WLMR…VHIF), 112 to 132 (LWCS…MGYV), and 178 to 198 (FFSL…IHLI). Heme b-binding residues include H81 and H95. Residues H182 and H196 each contribute to the heme b site. An a ubiquinone-binding site is contributed by H201. The next 4 membrane-spanning stretches (helical) occupy residues 224–244 (FYTK…IFIF), 288–308 (IGGV…PFTN), 320–340 (IFKV…WVGQ), and 347–367 (YTEI…IIIP).

The protein belongs to the cytochrome b family. Fungal cytochrome b-c1 complex contains 10 subunits; 3 respiratory subunits, 2 core proteins and 5 low-molecular weight proteins. Cytochrome b-c1 complex is a homodimer. The cofactor is heme b.

The protein resides in the mitochondrion inner membrane. Component of the ubiquinol-cytochrome c reductase complex (complex III or cytochrome b-c1 complex) that is part of the mitochondrial respiratory chain. The b-c1 complex mediates electron transfer from ubiquinol to cytochrome c. Contributes to the generation of a proton gradient across the mitochondrial membrane that is then used for ATP synthesis. The polypeptide is Cytochrome b (cob) (Phytophthora megasperma (Potato pink rot fungus)).